The primary structure comprises 72 residues: Translation initiation factor IF-1 (72 aa).

The S1-like domain occupies 1 to 72 (MAKEEVLEFP…TKGRITYRFK (72 aa)).

This sequence belongs to the IF-1 family. In terms of assembly, component of the 30S ribosomal translation pre-initiation complex which assembles on the 30S ribosome in the order IF-2 and IF-3, IF-1 and N-formylmethionyl-tRNA(fMet); mRNA recruitment can occur at any time during PIC assembly.

It localises to the cytoplasm. Functionally, one of the essential components for the initiation of protein synthesis. Stabilizes the binding of IF-2 and IF-3 on the 30S subunit to which N-formylmethionyl-tRNA(fMet) subsequently binds. Helps modulate mRNA selection, yielding the 30S pre-initiation complex (PIC). Upon addition of the 50S ribosomal subunit IF-1, IF-2 and IF-3 are released leaving the mature 70S translation initiation complex. The polypeptide is Translation initiation factor IF-1 (Brucella abortus (strain 2308)).